The primary structure comprises 199 residues: Large ribosomal subunit protein bL25 (199 aa).

The protein belongs to the bacterial ribosomal protein bL25 family. CTC subfamily. Part of the 50S ribosomal subunit; part of the 5S rRNA/L5/L18/L25 subcomplex. Contacts the 5S rRNA. Binds to the 5S rRNA independently of L5 and L18.

Its function is as follows. This is one of the proteins that binds to the 5S RNA in the ribosome where it forms part of the central protuberance. This chain is Large ribosomal subunit protein bL25, found in Chlorobaculum tepidum (strain ATCC 49652 / DSM 12025 / NBRC 103806 / TLS) (Chlorobium tepidum).